The primary structure comprises 196 residues: DnaA initiator-associating protein DiaA (196 aa).

The SIS domain occupies 34 to 196 (MVQSLLNGNK…DNTLFPHQND (163 aa)).

It belongs to the SIS family. DiaA subfamily. Homotetramer; dimer of dimers.

In terms of biological role, required for the timely initiation of chromosomal replication via direct interactions with the DnaA initiator protein. The polypeptide is DnaA initiator-associating protein DiaA (Pectobacterium atrosepticum (strain SCRI 1043 / ATCC BAA-672) (Erwinia carotovora subsp. atroseptica)).